The following is a 599-amino-acid chain: Proline--tRNA ligase (599 aa).

It belongs to the class-II aminoacyl-tRNA synthetase family. ProS type 1 subfamily. As to quaternary structure, homodimer.

The protein localises to the cytoplasm. The catalysed reaction is tRNA(Pro) + L-proline + ATP = L-prolyl-tRNA(Pro) + AMP + diphosphate. Catalyzes the attachment of proline to tRNA(Pro) in a two-step reaction: proline is first activated by ATP to form Pro-AMP and then transferred to the acceptor end of tRNA(Pro). As ProRS can inadvertently accommodate and process non-cognate amino acids such as alanine and cysteine, to avoid such errors it has two additional distinct editing activities against alanine. One activity is designated as 'pretransfer' editing and involves the tRNA(Pro)-independent hydrolysis of activated Ala-AMP. The other activity is designated 'posttransfer' editing and involves deacylation of mischarged Ala-tRNA(Pro). The misacylated Cys-tRNA(Pro) is not edited by ProRS. The chain is Proline--tRNA ligase from Prochlorococcus marinus (strain MIT 9303).